Reading from the N-terminus, the 25-residue chain is Pregnancy-associated glycoprotein 72 (25 aa).

Asn-4 and Asn-21 each carry an N-linked (GlcNAc...) asparagine glycan.

Belongs to the peptidase A1 family. Post-translationally, N-glycosylated. Expressed in chorionic epithelium (trophectoderm).

The protein localises to the secreted. Its subcellular location is the extracellular space. The polypeptide is Pregnancy-associated glycoprotein 72 (Bison bison (American bison)).